The sequence spans 269 residues: Thiazole synthase (269 aa).

Catalysis depends on K109, which acts as the Schiff-base intermediate with DXP. 1-deoxy-D-xylulose 5-phosphate-binding positions include G170, 196–197 (AG), and 218–219 (NT).

The protein belongs to the ThiG family. Homotetramer. Forms heterodimers with either ThiH or ThiS.

The protein resides in the plastid. Its subcellular location is the chloroplast. The enzyme catalyses [ThiS sulfur-carrier protein]-C-terminal-Gly-aminoethanethioate + 2-iminoacetate + 1-deoxy-D-xylulose 5-phosphate = [ThiS sulfur-carrier protein]-C-terminal Gly-Gly + 2-[(2R,5Z)-2-carboxy-4-methylthiazol-5(2H)-ylidene]ethyl phosphate + 2 H2O + H(+). The protein operates within cofactor biosynthesis; thiamine diphosphate biosynthesis. Its function is as follows. Catalyzes the rearrangement of 1-deoxy-D-xylulose 5-phosphate (DXP) to produce the thiazole phosphate moiety of thiamine. Sulfur is provided by the thiocarboxylate moiety of the carrier protein ThiS. In vitro, sulfur can be provided by H(2)S. This chain is Thiazole synthase, found in Phaeodactylum tricornutum (strain CCAP 1055/1).